A 297-amino-acid polypeptide reads, in one-letter code: Protein COFACTOR ASSEMBLY OF COMPLEX C SUBUNIT B CCB4, chloroplastic (297 aa).

The N-terminal 33 residues, 1–33 (MEARIILLRIQIPWSANRQFSHPPLDFPRFIRA), are a transit peptide targeting the chloroplast. The Stromal segment spans residues 34-70 (SSSSTSQKPKTYEGPKPRKNLVADFISKNDDLVRSLP). Residues 71–91 (IYVGGASLLAVLFNRTVSGIA) traverse the membrane as a helical segment. The Lumenal portion of the chain corresponds to 92–103 (PVADASSSQSRA). Residues 104 to 124 (DLLALGLAVTNLLTGLVWLSI) form a helical membrane-spanning segment. Residues 125–297 (RPKSITPVNP…DSDEISRVTV (173 aa)) are Stromal-facing.

It is found in the plastid. Its subcellular location is the chloroplast thylakoid membrane. Required for the biogenesis and accumulation of native cytochrome b6 in the thylakoid membrane. Controls the conversion of apocytochrome b6 to holocytochrome b6. Required for covalent binding of the c-type heme to cytochrome b6. The polypeptide is Protein COFACTOR ASSEMBLY OF COMPLEX C SUBUNIT B CCB4, chloroplastic (Arabidopsis thaliana (Mouse-ear cress)).